The primary structure comprises 142 residues: Regulator of ribonuclease activity B (142 aa).

The tract at residues 117-142 is disordered; it reads PNADEDEYGEDGEFFDDEFADDDEKR.

It belongs to the RraB family. Interacts with the C-terminal region of Rne.

It is found in the cytoplasm. Globally modulates RNA abundance by binding to RNase E (Rne) and regulating its endonucleolytic activity. Can modulate Rne action in a substrate-dependent manner by altering the composition of the degradosome. In Actinobacillus succinogenes (strain ATCC 55618 / DSM 22257 / CCUG 43843 / 130Z), this protein is Regulator of ribonuclease activity B.